The sequence spans 132 residues: Putative apolipoprotein(a)-like protein 2 (132 aa).

A signal peptide spans 1 to 21 (MEHKEVVLLLLLFLKSAPTET). Positions 27–105 (ECYHSNGQSY…RWEYCNLTRC (79 aa)) constitute a Kringle domain. 3 disulfides stabilise this stretch: cysteine 28/cysteine 105, cysteine 49/cysteine 88, and cysteine 77/cysteine 100. The N-linked (GlcNAc...) asparagine glycan is linked to asparagine 101.

In terms of tissue distribution, expressed in liver but not in other tissues tested.

The protein localises to the secreted. In Homo sapiens (Human), this protein is Putative apolipoprotein(a)-like protein 2 (LPAL2).